Reading from the N-terminus, the 239-residue chain is uncharacterized protein (239 aa).

The protein localises to the endoplasmic reticulum. It is found in the golgi apparatus. This is an uncharacterized protein from Schizosaccharomyces pombe (strain 972 / ATCC 24843) (Fission yeast).